The following is a 505-amino-acid chain: MTEPEPTLEQEPTPEPEPTQEPTPEPTPEPEPTQEPESEPELELKQENGCTKASEQKSPEEFEPPEGGWGWVVMLASMWCNGSVFGIQNAFGIMFVYLLNEFGSEHDADLRFKTAWVGSLSMGMIFFCSPIVSVFTDLLGCRITAVGGAAVGCVGLLASSFVTSLGPMYFTYGIVFACGCSFAYQPSLVILGHYFKRRLGLVNGIVTAGSSVFTITLPYMLSGLLKSVGLYHTLRVLAIFMFILMLAGLTYKPLLPKPVSSSKPGSRCPPLSRIFNVNIWKSLGYRIWAFGIPAALYGYFVPYVHLMTHVEERFGPEANKEVLLACIGITSGVGRLIFGRVADYVPGVNKVFLQVSSFMVIGVMSMMIPLCHVFGGLIAVCLLMGLFDGCFICIMAPIAFELVGSQNVSQAIGFLLGMMSIPMTVGPPIAGFLRDRLGSYDVAFYLAGIPPLIGGAVLCAIPWVEARRKRREAANTAENTEKMLESRSPPLEDTVCRTEEPESVI.

The segment covering 1–14 has biased composition (acidic residues); the sequence is MTEPEPTLEQEPTP. Residues 1–64 form a disordered region; sequence MTEPEPTLEQ…EQKSPEEFEP (64 aa). The Cytoplasmic portion of the chain corresponds to 1-66; that stretch reads MTEPEPTLEQ…KSPEEFEPPE (66 aa). Residues 15 to 31 show a composition bias toward pro residues; sequence EPEPTQEPTPEPTPEPE. Positions 32-41 are enriched in acidic residues; that stretch reads PTQEPESEPE. A helical membrane pass occupies residues 67 to 87; sequence GGWGWVVMLASMWCNGSVFGI. Topologically, residues 88-114 are extracellular; the sequence is QNAFGIMFVYLLNEFGSEHDADLRFKT. A helical transmembrane segment spans residues 115–135; the sequence is AWVGSLSMGMIFFCSPIVSVF. The Cytoplasmic segment spans residues 136–142; it reads TDLLGCR. The chain crosses the membrane as a helical span at residues 143-163; it reads ITAVGGAAVGCVGLLASSFVT. The Extracellular portion of the chain corresponds to 164–171; that stretch reads SLGPMYFT. The helical transmembrane segment at 172 to 192 threads the bilayer; sequence YGIVFACGCSFAYQPSLVILG. Residues 193-204 are Cytoplasmic-facing; the sequence is HYFKRRLGLVNG. A helical transmembrane segment spans residues 205–225; sequence IVTAGSSVFTITLPYMLSGLL. At 226-235 the chain is on the extracellular side; that stretch reads KSVGLYHTLR. A helical transmembrane segment spans residues 236–256; that stretch reads VLAIFMFILMLAGLTYKPLLP. The Cytoplasmic portion of the chain corresponds to 257–286; sequence KPVSSSKPGSRCPPLSRIFNVNIWKSLGYR. A helical transmembrane segment spans residues 287 to 307; that stretch reads IWAFGIPAALYGYFVPYVHLM. The Extracellular segment spans residues 308-321; the sequence is THVEERFGPEANKE. A helical transmembrane segment spans residues 322–342; sequence VLLACIGITSGVGRLIFGRVA. Asp-343 is a topological domain (cytoplasmic). A helical transmembrane segment spans residues 344-364; it reads YVPGVNKVFLQVSSFMVIGVM. Topologically, residues 365–377 are extracellular; the sequence is SMMIPLCHVFGGL. Residues 378-400 traverse the membrane as a helical segment; it reads IAVCLLMGLFDGCFICIMAPIAF. At 401–411 the chain is on the cytoplasmic side; the sequence is ELVGSQNVSQA. The chain crosses the membrane as a helical span at residues 412 to 432; that stretch reads IGFLLGMMSIPMTVGPPIAGF. The Extracellular segment spans residues 433–443; sequence LRDRLGSYDVA. The helical transmembrane segment at 444–464 threads the bilayer; sequence FYLAGIPPLIGGAVLCAIPWV. The Cytoplasmic portion of the chain corresponds to 465-505; it reads EARRKRREAANTAENTEKMLESRSPPLEDTVCRTEEPESVI. The disordered stretch occupies residues 474–505; sequence ANTAENTEKMLESRSPPLEDTVCRTEEPESVI. Residues 494 to 505 show a composition bias toward basic and acidic residues; it reads TVCRTEEPESVI.

This sequence belongs to the major facilitator superfamily. Monocarboxylate porter (TC 2.A.1.13) family.

The protein localises to the cell membrane. It is found in the basolateral cell membrane. The enzyme catalyses L-tryptophan(in) = L-tryptophan(out). It carries out the reaction L-tyrosine(in) = L-tyrosine(out). It catalyses the reaction L-phenylalanine(in) = L-phenylalanine(out). The catalysed reaction is 3,3',5-triiodo-L-thyronine(out) = 3,3',5-triiodo-L-thyronine(in). The enzyme catalyses L-thyroxine(out) = L-thyroxine(in). Its function is as follows. Sodium- and proton-independent thyroid hormones and aromatic acids transporter. Mediates both uptake and efflux of 3,5,3'-triiodothyronine (T3) and 3,5,3',5'-tetraiodothyronine (T4) with high affinity, suggesting a role in the homeostasis of thyroid hormone levels. Responsible for low affinity bidirectional transport of the aromatic amino acids, such as phenylalanine, tyrosine, tryptophan and L-3,4-dihydroxyphenylalanine (L-dopa). Plays an important role in homeostasis of aromatic amino acids. The sequence is that of Monocarboxylate transporter 10 (slc16a10) from Danio rerio (Zebrafish).